The following is a 307-amino-acid chain: UDP-3-O-acyl-N-acetylglucosamine deacetylase (307 aa).

3 residues coordinate Zn(2+): His78, His241, and Asp245. The active-site Proton donor is His268.

This sequence belongs to the LpxC family. Zn(2+) is required as a cofactor.

It carries out the reaction a UDP-3-O-[(3R)-3-hydroxyacyl]-N-acetyl-alpha-D-glucosamine + H2O = a UDP-3-O-[(3R)-3-hydroxyacyl]-alpha-D-glucosamine + acetate. It functions in the pathway glycolipid biosynthesis; lipid IV(A) biosynthesis; lipid IV(A) from (3R)-3-hydroxytetradecanoyl-[acyl-carrier-protein] and UDP-N-acetyl-alpha-D-glucosamine: step 2/6. Its function is as follows. Catalyzes the hydrolysis of UDP-3-O-myristoyl-N-acetylglucosamine to form UDP-3-O-myristoylglucosamine and acetate, the committed step in lipid A biosynthesis. The polypeptide is UDP-3-O-acyl-N-acetylglucosamine deacetylase (Polaromonas sp. (strain JS666 / ATCC BAA-500)).